We begin with the raw amino-acid sequence, 174 residues long: Large ribosomal subunit protein bL17 (174 aa).

It belongs to the bacterial ribosomal protein bL17 family. As to quaternary structure, part of the 50S ribosomal subunit. Contacts protein L32.

The chain is Large ribosomal subunit protein bL17 from Acetivibrio thermocellus (strain ATCC 27405 / DSM 1237 / JCM 9322 / NBRC 103400 / NCIMB 10682 / NRRL B-4536 / VPI 7372) (Clostridium thermocellum).